A 209-amino-acid chain; its full sequence is Large ribosomal subunit protein uL3 (209 aa).

Residues 130–154 (RGPMSHGSKFHRAVGSMGASSDPSR) are disordered.

Belongs to the universal ribosomal protein uL3 family. As to quaternary structure, part of the 50S ribosomal subunit. Forms a cluster with proteins L14 and L19.

One of the primary rRNA binding proteins, it binds directly near the 3'-end of the 23S rRNA, where it nucleates assembly of the 50S subunit. In Clostridium kluyveri (strain NBRC 12016), this protein is Large ribosomal subunit protein uL3.